Consider the following 148-residue polypeptide: Transcription antitermination protein NusB (148 aa).

This sequence belongs to the NusB family.

Functionally, involved in transcription antitermination. Required for transcription of ribosomal RNA (rRNA) genes. Binds specifically to the boxA antiterminator sequence of the ribosomal RNA (rrn) operons. This is Transcription antitermination protein NusB from Desulfitobacterium hafniense (strain DSM 10664 / DCB-2).